Reading from the N-terminus, the 258-residue chain is Protein STAY-GREEN LIKE, chloroplastic (258 aa).

It belongs to the staygreen family. Strongly expressed in leaves, stems and panicles, and at lower levels in roots and seeds.

Functionally, promotes chlorophyll degradation in leaves. May be involved in LHCI proteins degradation, regulating the balance between LHCI and LHCII. This is Protein STAY-GREEN LIKE, chloroplastic from Oryza sativa subsp. japonica (Rice).